The sequence spans 349 residues: Phosphoribosylformylglycinamidine cyclo-ligase (349 aa).

The protein belongs to the AIR synthase family.

It is found in the cytoplasm. The enzyme catalyses 2-formamido-N(1)-(5-O-phospho-beta-D-ribosyl)acetamidine + ATP = 5-amino-1-(5-phospho-beta-D-ribosyl)imidazole + ADP + phosphate + H(+). Its pathway is purine metabolism; IMP biosynthesis via de novo pathway; 5-amino-1-(5-phospho-D-ribosyl)imidazole from N(2)-formyl-N(1)-(5-phospho-D-ribosyl)glycinamide: step 2/2. The sequence is that of Phosphoribosylformylglycinamidine cyclo-ligase from Methanococcus maripaludis (strain DSM 14266 / JCM 13030 / NBRC 101832 / S2 / LL).